The chain runs to 279 residues: Diaminopimelate epimerase 1 (279 aa).

Residues N13 and N66 each contribute to the substrate site. Residue C75 is the Proton donor of the active site. Residues 76–77 (GN), N164, N197, and 215–216 (ER) contribute to the substrate site. C224 functions as the Proton acceptor in the catalytic mechanism. Residue 225–226 (GT) participates in substrate binding.

It belongs to the diaminopimelate epimerase family. Homodimer.

Its subcellular location is the cytoplasm. The catalysed reaction is (2S,6S)-2,6-diaminopimelate = meso-2,6-diaminopimelate. The protein operates within amino-acid biosynthesis; L-lysine biosynthesis via DAP pathway; DL-2,6-diaminopimelate from LL-2,6-diaminopimelate: step 1/1. Its function is as follows. Catalyzes the stereoinversion of LL-2,6-diaminopimelate (L,L-DAP) to meso-diaminopimelate (meso-DAP), a precursor of L-lysine and an essential component of the bacterial peptidoglycan. This is Diaminopimelate epimerase 1 from Nostoc sp. (strain PCC 7120 / SAG 25.82 / UTEX 2576).